A 22-amino-acid chain; its full sequence is Ocellatin-LB1 (22 aa).

Met-22 is subject to Methionine amide.

As to expression, expressed by the skin glands.

It localises to the secreted. In terms of biological role, antibacterial peptide that inhibits Gram-negative bacteria A.actinomycetemcomitans ATCC 29522 (MIC=222.37 uM) and E.coli ATCC 25922 (MIC=114.04 uM). Also has antifungal activity against C.albicans ATCC 18804 (MIC=233.55 uM) and C.lusitaniae ATCC 56936 (MIC=233.55 uM). No activity against the Gram-positive bacterium S.aureus ATCC 25923. Shows virtually no hemolytic activity towards rabbit erythrocytes. The protein is Ocellatin-LB1 of Leptodactylus labyrinthicus (Labyrinth frog).